A 347-amino-acid polypeptide reads, in one-letter code: sn-1 oleoyl-lipid 12-desaturase (347 aa).

Helical transmembrane passes span 41–63 (AWSR…AIAP) and 67–85 (LLPV…FVIG). The Histidine box-1 motif lies at 86–90 (HDCGH). Residues 98-118 (WVNNLVGHLAFLPLIYPFHSW) form a helical membrane-spanning segment. The Histidine box-2 motif lies at 122 to 126 (HNHHH). 3 helical membrane passes run 164-184 (LWWL…FAFE), 196-216 (LFVI…LGVW), and 218-238 (VVKF…TFTL). The Histidine box-3 motif lies at 286–290 (HHLST).

Belongs to the fatty acid desaturase type 2 family. The cofactor is Fe(2+).

The protein localises to the membrane. The enzyme catalyses a 1-[(9Z)-octadecenoyl]-2-acyl-glycerolipid + 2 reduced [2Fe-2S]-[ferredoxin] + O2 + 2 H(+) = a 1-[(9Z,12Z)-octadecdienoyl]-2-acyl-glycerolipid + 2 oxidized [2Fe-2S]-[ferredoxin] + 2 H2O. It participates in lipid metabolism; polyunsaturated fatty acid biosynthesis. In terms of biological role, desaturase involved in fatty acid biosynthesis. Introduces a double bond at carbon 12 of oleoyl groups (18:1) attached to the sn-1 position of the glycerol moiety of membrane glycerolipids. Can also efficiently catalyze the desaturation of palmitoleic acid (16:1) in vitro. The chain is sn-1 oleoyl-lipid 12-desaturase from Picosynechococcus sp. (strain ATCC 27264 / PCC 7002 / PR-6) (Agmenellum quadruplicatum).